We begin with the raw amino-acid sequence, 275 residues long: Light-independent protochlorophyllide reductase iron-sulfur ATP-binding protein (275 aa).

ATP-binding positions include 12 to 17 (GIGKST) and Lys-41. Ser-16 contacts Mg(2+). Residues Cys-97 and Cys-131 each contribute to the [4Fe-4S] cluster site. An ATP-binding site is contributed by 182–183 (NR).

It belongs to the NifH/BchL/ChlL family. As to quaternary structure, homodimer. Protochlorophyllide reductase is composed of three subunits; BchL, BchN and BchB. Requires [4Fe-4S] cluster as cofactor.

The enzyme catalyses chlorophyllide a + oxidized 2[4Fe-4S]-[ferredoxin] + 2 ADP + 2 phosphate = protochlorophyllide a + reduced 2[4Fe-4S]-[ferredoxin] + 2 ATP + 2 H2O. The protein operates within porphyrin-containing compound metabolism; bacteriochlorophyll biosynthesis (light-independent). Component of the dark-operative protochlorophyllide reductase (DPOR) that uses Mg-ATP and reduced ferredoxin to reduce ring D of protochlorophyllide (Pchlide) to form chlorophyllide a (Chlide). This reaction is light-independent. The L component serves as a unique electron donor to the NB-component of the complex, and binds Mg-ATP. This is Light-independent protochlorophyllide reductase iron-sulfur ATP-binding protein from Chlorobium limicola (strain DSM 245 / NBRC 103803 / 6330).